The sequence spans 123 residues: Aspartate 1-decarboxylase (123 aa).

Catalysis depends on S25, which acts as the Schiff-base intermediate with substrate; via pyruvic acid. A Pyruvic acid (Ser) modification is found at S25. T57 provides a ligand contact to substrate. The active-site Proton donor is the Y58. 73-75 (GAA) contacts substrate.

It belongs to the PanD family. As to quaternary structure, heterooctamer of four alpha and four beta subunits. Requires pyruvate as cofactor. Post-translationally, is synthesized initially as an inactive proenzyme, which is activated by self-cleavage at a specific serine bond to produce a beta-subunit with a hydroxyl group at its C-terminus and an alpha-subunit with a pyruvoyl group at its N-terminus.

It localises to the cytoplasm. The enzyme catalyses L-aspartate + H(+) = beta-alanine + CO2. The protein operates within cofactor biosynthesis; (R)-pantothenate biosynthesis; beta-alanine from L-aspartate: step 1/1. Catalyzes the pyruvoyl-dependent decarboxylation of aspartate to produce beta-alanine. This is Aspartate 1-decarboxylase from Clostridium novyi (strain NT).